A 255-amino-acid chain; its full sequence is Cullin-like protein 3 (255 aa).

It belongs to the cullin family.

The sequence is that of Cullin-like protein 3 from Arabidopsis thaliana (Mouse-ear cress).